The primary structure comprises 195 residues: Probable molybdenum cofactor guanylyltransferase (195 aa).

GTP is bound by residues 6 to 8, Lys-18, Asp-67, and Asp-93; that span reads LAG. Asp-93 contributes to the Mg(2+) binding site.

The protein belongs to the MobA family. Mg(2+) is required as a cofactor.

It localises to the cytoplasm. The catalysed reaction is Mo-molybdopterin + GTP + H(+) = Mo-molybdopterin guanine dinucleotide + diphosphate. Transfers a GMP moiety from GTP to Mo-molybdopterin (Mo-MPT) cofactor (Moco or molybdenum cofactor) to form Mo-molybdopterin guanine dinucleotide (Mo-MGD) cofactor. In Thermococcus sibiricus (strain DSM 12597 / MM 739), this protein is Probable molybdenum cofactor guanylyltransferase.